We begin with the raw amino-acid sequence, 130 residues long: DUF35 domain-containing scaffold protein (130 aa).

Residues Cys-20, Cys-23, Cys-34, and Cys-37 each coordinate Zn(2+).

It belongs to the scaffold protein DUF35 family. Interacts with acetoacetyl-CoA thiolase and HMG-CoA synthase (HMGCS) that catalyzes the first and second step in the mevalonate pathway, respectively.

In terms of biological role, functions as a scaffold to connect the acetoacetyl-CoA thiolase and HMG-CoA synthase (HMGCS) dimers in the channeling thiolase/HMGCS complex, which allows for efficient coupling of the endergonic thiolase reaction with the exergonic HMGCS reaction. The sequence is that of DUF35 domain-containing scaffold protein from Methanothermococcus thermolithotrophicus (Methanococcus thermolithotrophicus).